The chain runs to 207 residues: Large ribosomal subunit protein bL17m (207 aa).

The segment covering 173-200 has biased composition (basic and acidic residues); that stretch reads EKESEHARLKEDHEDEKTVKKDWKRGDP. The interval 173–207 is disordered; sequence EKESEHARLKEDHEDEKTVKKDWKRGDPIPRPTYI.

It belongs to the bacterial ribosomal protein bL17 family. Component of the mitochondrial large ribosomal subunit (mt-LSU). Mature yeast 74S mitochondrial ribosomes consist of a small (37S) and a large (54S) subunit. The 37S small subunit contains a 15S ribosomal RNA (15S mt-rRNA) and at least 32 different proteins. The 54S large subunit contains a 21S rRNA (21S mt-rRNA) and at least 45 different proteins.

Its subcellular location is the mitochondrion. In terms of biological role, component of the mitochondrial ribosome (mitoribosome), a dedicated translation machinery responsible for the synthesis of mitochondrial genome-encoded proteins, including at least some of the essential transmembrane subunits of the mitochondrial respiratory chain. The mitoribosomes are attached to the mitochondrial inner membrane and translation products are cotranslationally integrated into the membrane. The sequence is that of Large ribosomal subunit protein bL17m (mrpl8) from Schizosaccharomyces pombe (strain 972 / ATCC 24843) (Fission yeast).